The following is a 118-amino-acid chain: Small ribosomal subunit protein uS13 (118 aa).

Residues 97–118 (VRGQRTKTNARTCKGPRKAIKK) are disordered.

This sequence belongs to the universal ribosomal protein uS13 family. In terms of assembly, part of the 30S ribosomal subunit. Forms a loose heterodimer with protein S19. Forms two bridges to the 50S subunit in the 70S ribosome.

In terms of biological role, located at the top of the head of the 30S subunit, it contacts several helices of the 16S rRNA. In the 70S ribosome it contacts the 23S rRNA (bridge B1a) and protein L5 of the 50S subunit (bridge B1b), connecting the 2 subunits; these bridges are implicated in subunit movement. Contacts the tRNAs in the A and P-sites. This is Small ribosomal subunit protein uS13 from Buchnera aphidicola subsp. Schizaphis graminum (strain Sg).